A 410-amino-acid polypeptide reads, in one-letter code: Histidine--tRNA ligase (410 aa).

The protein belongs to the class-II aminoacyl-tRNA synthetase family. As to quaternary structure, homodimer.

The protein resides in the cytoplasm. The catalysed reaction is tRNA(His) + L-histidine + ATP = L-histidyl-tRNA(His) + AMP + diphosphate + H(+). This is Histidine--tRNA ligase from Elusimicrobium minutum (strain Pei191).